The following is a 606-amino-acid chain: DNA mismatch repair protein MutL (606 aa).

The disordered stretch occupies residues 350-371; it reads GWRPSAPSAPWTPEASPSRPYQ.

The protein belongs to the DNA mismatch repair MutL/HexB family.

This protein is involved in the repair of mismatches in DNA. It is required for dam-dependent methyl-directed DNA mismatch repair. May act as a 'molecular matchmaker', a protein that promotes the formation of a stable complex between two or more DNA-binding proteins in an ATP-dependent manner without itself being part of a final effector complex. In Rhizobium rhizogenes (strain K84 / ATCC BAA-868) (Agrobacterium radiobacter), this protein is DNA mismatch repair protein MutL.